The chain runs to 361 residues: Septin-2 (361 aa).

Residue tyrosine 17 is modified to Phosphotyrosine. Positions 34–306 constitute a Septin-type G domain; it reads KGFEFTLMVV…ENFRSERLKR (273 aa). Residues 44–51 are G1 motif; it reads GESGLGKS. GTP is bound by residues 44–51, threonine 78, glycine 104, and 183–191; these read GESGLGKS and KADTLTLKE. Positions 101–104 are G3 motif; the sequence is DTPG. The tract at residues 182–185 is G4 motif; that stretch reads AKAD. Position 190 is an N6-acetyllysine (lysine 190). A Phosphotyrosine modification is found at tyrosine 211. Serine 218 carries the phosphoserine modification. 2 residues coordinate GTP: glycine 241 and arginine 256. Positions 260–270 are important for dimerization; that stretch reads WGVVEVENPEH.

Belongs to the TRAFAC class TrmE-Era-EngA-EngB-Septin-like GTPase superfamily. Septin GTPase family. In terms of assembly, septins polymerize into heterooligomeric protein complexes that form filaments, and associate with cellular membranes, actin filaments and microtubules. GTPase activity is required for filament formation. Filaments are assembled from asymmetrical heterotrimers, composed of SEPTIN2, SEPTIN6 and SEPTIN7 that associate head-to-head to form a hexameric unit. Interaction between SEPTIN2 and SEPTIN7 seems indirect. Interacts with SEPTIN5. Interaction with SEPTIN4 not detected. Interacts with SEPTIN9. Component of a septin core octameric complex consisting of SEPTIN12, SEPTIN7, SEPTIN6 and SEPTIN2 or SEPTIN4 in the order 12-7-6-2-2-6-7-12 or 12-7-6-4-4-6-7-12 and located in the sperm annulus. Interacts with MAP4. Interacts with DZIP1L.

The protein localises to the cytoplasm. The protein resides in the cytoskeleton. It localises to the spindle. Its subcellular location is the chromosome. It is found in the centromere. The protein localises to the kinetochore. The protein resides in the cleavage furrow. It localises to the midbody. Its subcellular location is the cell cortex. It is found in the cell projection. The protein localises to the cilium membrane. The protein resides in the cilium. It localises to the flagellum. Filament-forming cytoskeletal GTPase. Forms a filamentous structure with SEPTIN12, SEPTIN6, SEPTIN2 and probably SEPTIN4 at the sperm annulus which is required for the structural integrity and motility of the sperm tail during postmeiotic differentiation. Required for normal organization of the actin cytoskeleton. Plays a role in the biogenesis of polarized columnar-shaped epithelium by maintaining polyglutamylated microtubules, thus facilitating efficient vesicle transport, and by impeding MAP4 binding to tubulin. Required for the progression through mitosis. Forms a scaffold at the midplane of the mitotic splindle required to maintain CENPE localization at kinetochores and consequently chromosome congression. During anaphase, may be required for chromosome segregation and spindle elongation. Plays a role in ciliogenesis and collective cell movements. In cilia, required for the integrity of the diffusion barrier at the base of the primary cilium that prevents diffusion of transmembrane proteins between the cilia and plasma membranes: probably acts by regulating the assembly of the tectonic-like complex (also named B9 complex) by localizing TMEM231 protein. The polypeptide is Septin-2 (Bos taurus (Bovine)).